The following is a 250-amino-acid chain: Small ribosomal subunit protein uS2 (250 aa).

Belongs to the universal ribosomal protein uS2 family.

The protein is Small ribosomal subunit protein uS2 of Teredinibacter turnerae (strain ATCC 39867 / T7901).